We begin with the raw amino-acid sequence, 275 residues long: Intercellular adhesion molecule 2 (275 aa).

A signal peptide spans 1–24; it reads MSSFSYRTLTVALFALICCPGSDE. The Extracellular segment spans residues 25–223; that stretch reads KVFEVHVRPK…EIYEPVSDSQ (199 aa). Positions 41–98 constitute an Ig-like C2-type 1 domain; it reads KGSLKVNCSTTCNQPEVGGLETSLDKILLDEQAQWKHYLVSNISHDTVLQCHFTCSGK. 6 N-linked (GlcNAc...) asparagine glycosylation sites follow: N47, N82, N105, N153, N176, and N187. Cystine bridges form between C48–C91 and C52–C95. The Ig-like C2-type 2 domain maps to 127-197; it reads GKSFTIECRV…FSCLAVLDLM (71 aa). C134 and C190 are disulfide-bonded. The helical transmembrane segment at 224 to 248 threads the bilayer; sequence MVIIVTVVSVLLSLFVTSVLLCFIF. The Cytoplasmic portion of the chain corresponds to 249–275; the sequence is GQHLRQQRMGTYGVRAAWRRLPQAFRP. The interval 251-275 is required for interaction with EZR, MSN and RDX and co-localization to microvilli; it reads HLRQQRMGTYGVRAAWRRLPQAFRP.

This sequence belongs to the immunoglobulin superfamily. ICAM family. In terms of assembly, interacts with RDX, EZR and MSN.

It is found in the membrane. It localises to the cell projection. Its subcellular location is the microvillus. ICAM proteins are ligands for the leukocyte adhesion protein LFA-1 (integrin alpha-L/beta-2). ICAM2 may play a role in lymphocyte recirculation by blocking LFA-1-dependent cell adhesion. It mediates adhesive interactions important for antigen-specific immune response, NK-cell mediated clearance, lymphocyte recirculation, and other cellular interactions important for immune response and surveillance. This Pan troglodytes (Chimpanzee) protein is Intercellular adhesion molecule 2 (ICAM2).